Here is a 122-residue protein sequence, read N- to C-terminus: Phospholipase A2 crotoxin basic subunit CBb (122 aa).

Cystine bridges form between Cys26–Cys115, Cys28–Cys44, Cys43–Cys95, Cys49–Cys122, Cys50–Cys88, Cys57–Cys81, and Cys75–Cys86. Residues Tyr27, Gly29, and Gly31 each coordinate Ca(2+). Residue His47 is part of the active site. A Ca(2+)-binding site is contributed by Asp48. Residue Asp89 is part of the active site.

This sequence belongs to the phospholipase A2 family. Group II subfamily. D49 sub-subfamily. Heterodimer of one of the acidic (CA1, CA2, CA3 or CA4) and one of the basic (CBa1, CBa2, CBb, CBc or CBd) subunits; non-covalently linked. The acidic subunit is non-toxic, without enzymatic activity and comprises 3 peptides that are cross-linked by 5 disulfide bridges. The basic subunit is toxic, has phospholipase A2 activity and is composed of a single chain. Multiple variants of each subunit give different crotoxin complexes that can be subdivided into 2 classes: (1) those of high toxicity, low PLA2 activity (CBb, CBc and CBd linked with high affinity to any CA) and high stability (K(d)=4.5 nM) and (2) those of moderate toxicity, high PLA2 activity (CBa2 linked with low affinity to any CA) and low stability (K(d)=25 nM). The cofactor is Ca(2+). In terms of tissue distribution, expressed by the venom gland.

The protein resides in the secreted. The enzyme catalyses a 1,2-diacyl-sn-glycero-3-phosphocholine + H2O = a 1-acyl-sn-glycero-3-phosphocholine + a fatty acid + H(+). Heterodimer CA-CB: Crotoxin is a potent presynaptic neurotoxin that possesses phospholipase A2 (PLA2) activity and exerts a lethal action by blocking neuromuscular transmission. It consists of a non-covalent association of a basic and weakly toxic PLA2 subunit (CBa2, CBb, CBc, or CBd), with a small acidic, non-enzymatic and non-toxic subunit (CA1, CA2, CA3 or CA4). The complex acts by binding to a specific 48-kDa protein (R48) receptor located on presynaptic membranes, forming a transient ternary complex CA-CB-R48, followed by dissociation of the CA-CB complex and release of the CA subunit. At equilibrium, only the CB subunits remain associated with the specific crotoxin receptor. In addition to neurotoxicity, crotoxin has been found to exert myotoxicity, nephrotoxicity, and cardiovascular toxicity. Moreover, anti-inflammatory, immunomodulatory, anti-tumor and analgesic effects of crotoxin have also been reported. Its function is as follows. Monomer CBb: The basic subunit of crotoxin is a snake venom phospholipase A2 (PLA2) that exhibits weak neurotoxicity (10-fold less than the heterodimer) and strong anticoagulant effects by binding to factor Xa (F10) and inhibiting the prothrombinase activity. In addition, it shows the same effects described for the heterodimer and binds the nucleotide-binding domain (NBD1) of CFTR chloride channels and increases the channel current. PLA2 catalyzes the calcium-dependent hydrolysis of the 2-acyl groups in 3-sn-phosphoglycerides. The protein is Phospholipase A2 crotoxin basic subunit CBb of Crotalus durissus terrificus (South American rattlesnake).